We begin with the raw amino-acid sequence, 208 residues long: High frequency lysogenization protein HflD homolog (208 aa).

Belongs to the HflD family.

The protein localises to the cytoplasm. Its subcellular location is the cell inner membrane. The chain is High frequency lysogenization protein HflD homolog from Edwardsiella ictaluri (strain 93-146).